The sequence spans 93 residues: Non-histone chromosomal protein 6A (93 aa).

Disordered regions lie at residues M1–R23 and P69–A93. Over residues P7–K16 the composition is skewed to basic residues. Positions P21–N89 form a DNA-binding region, HMG box. The span at P69–L87 shows a compositional bias: basic and acidic residues.

The protein belongs to the NHP6 family. In terms of assembly, weakly associates with the stable SPT16-POB3 heterodimer to form the FACT (yFACT or SNP) complex, which is associated with nucleosomes. Multiple molecules of NHP6 (NHP6A and/or NHP6B) are required to recruit the SPT16-POB3 heterodimer to DNA.

It localises to the nucleus. It is found in the chromosome. Its function is as follows. DNA-binding protein that induces severe bending of DNA. Required for DNA-binding by the FACT complex, a general chromatin factor that acts to reorganize nucleosomes. The FACT complex is involved in multiple processes that require DNA as a template such as mRNA elongation, DNA replication and DNA repair. Also augments the fidelity of transcription by RNA polymerase III independently of any role in the FACT complex. Required for transcriptional initiation fidelity of some but not all tRNA genes. Seems to be functionally redundant with NHP6B. This chain is Non-histone chromosomal protein 6A (NHP6A), found in Saccharomyces cerevisiae (strain ATCC 204508 / S288c) (Baker's yeast).